Consider the following 379-residue polypeptide: Citrate synthase (379 aa).

Residues histidine 225, histidine 265, and aspartate 316 contribute to the active site.

The protein belongs to the citrate synthase family. Homodimer.

It catalyses the reaction oxaloacetate + acetyl-CoA + H2O = citrate + CoA + H(+). Its pathway is carbohydrate metabolism; tricarboxylic acid cycle; isocitrate from oxaloacetate: step 1/2. Functionally, might regulate the synthesis and function of enzymes involved in later enzymatic steps of Krebs cycle. The polypeptide is Citrate synthase (citZ) (Haloferax volcanii (strain ATCC 29605 / DSM 3757 / JCM 8879 / NBRC 14742 / NCIMB 2012 / VKM B-1768 / DS2) (Halobacterium volcanii)).